A 351-amino-acid polypeptide reads, in one-letter code: Dihydroorotate dehydrogenase (quinone) (351 aa).

FMN is bound by residues 67–71 and T91; that span reads AGFDK. Substrate is bound at residue K71. 116–120 contacts substrate; sequence NAMGF. Residues N145 and N178 each contribute to the FMN site. N178 is a binding site for substrate. The active-site Nucleophile is the S181. Substrate is bound at residue N183. 2 residues coordinate FMN: K214 and T242. 243-244 provides a ligand contact to substrate; the sequence is NT. Residues G262, G291, and 312–313 each bind FMN; that span reads YS.

Belongs to the dihydroorotate dehydrogenase family. Type 2 subfamily. As to quaternary structure, monomer. It depends on FMN as a cofactor.

The protein resides in the cell membrane. The enzyme catalyses (S)-dihydroorotate + a quinone = orotate + a quinol. The protein operates within pyrimidine metabolism; UMP biosynthesis via de novo pathway; orotate from (S)-dihydroorotate (quinone route): step 1/1. In terms of biological role, catalyzes the conversion of dihydroorotate to orotate with quinone as electron acceptor. This is Dihydroorotate dehydrogenase (quinone) from Helicobacter pylori (strain G27).